The primary structure comprises 458 residues: Argininosuccinate lyase (458 aa).

This sequence belongs to the lyase 1 family. Argininosuccinate lyase subfamily.

Its subcellular location is the cytoplasm. The catalysed reaction is 2-(N(omega)-L-arginino)succinate = fumarate + L-arginine. The protein operates within amino-acid biosynthesis; L-arginine biosynthesis; L-arginine from L-ornithine and carbamoyl phosphate: step 3/3. In Pelobacter propionicus (strain DSM 2379 / NBRC 103807 / OttBd1), this protein is Argininosuccinate lyase.